Reading from the N-terminus, the 608-residue chain is Phosphoenolpyruvate carboxykinase [GTP] (608 aa).

Residues R82 and 222-224 (YGG) contribute to the substrate site. Residues K231 and H251 each coordinate Mn(2+). S273 provides a ligand contact to substrate. Residue 274-279 (ACGKTN) participates in GTP binding. C275 is an active-site residue. Mn(2+) is bound at residue D298. Position 389-391 (389-391 (NSR)) interacts with substrate. GTP-binding positions include R391, R422, and 517 to 520 (FGDN).

It belongs to the phosphoenolpyruvate carboxykinase [GTP] family. As to quaternary structure, monomer. Mn(2+) is required as a cofactor.

The protein resides in the cytoplasm. It catalyses the reaction oxaloacetate + GTP = phosphoenolpyruvate + GDP + CO2. It participates in carbohydrate biosynthesis; gluconeogenesis. Its function is as follows. Catalyzes the conversion of oxaloacetate (OAA) to phosphoenolpyruvate (PEP), the rate-limiting step in the metabolic pathway that produces glucose from lactate and other precursors derived from the citric acid cycle. The polypeptide is Phosphoenolpyruvate carboxykinase [GTP] (Paenarthrobacter aurescens (strain TC1)).